A 515-amino-acid chain; its full sequence is RNA-splicing ligase RtcB homolog (515 aa).

5 residues coordinate Mn(2+): Asp-121, Cys-124, His-229, His-269, and His-363. Residue 228–232 (NHYGE) participates in GMP binding. GMP-binding positions include 363–364 (HN), 412–415 (GGTM), Ser-419, 438–441 (HGSG), and Lys-514. The active-site GMP-histidine intermediate is the His-438.

Belongs to the RtcB family. Catalytic component of the tRNA-splicing ligase complex. Mn(2+) serves as cofactor.

The catalysed reaction is a 3'-end 3'-phospho-ribonucleotide-RNA + a 5'-end dephospho-ribonucleoside-RNA + GTP = a ribonucleotidyl-ribonucleotide-RNA + GMP + diphosphate. The enzyme catalyses a 3'-end 2',3'-cyclophospho-ribonucleotide-RNA + a 5'-end dephospho-ribonucleoside-RNA + GTP + H2O = a ribonucleotidyl-ribonucleotide-RNA + GMP + diphosphate + H(+). Catalytic subunit of the tRNA-splicing ligase complex that acts by directly joining spliced tRNA halves to mature-sized tRNAs by incorporating the precursor-derived splice junction phosphate into the mature tRNA as a canonical 3',5'-phosphodiester. May act as an RNA ligase with broad substrate specificity, and may function toward other RNAs. In Theileria annulata, this protein is RNA-splicing ligase RtcB homolog.